The primary structure comprises 208 residues: MQDKLKVLLIDDHPLMRRGIKQLVELDDNFEVVADVSSGTEGISVALQTSPDVIILDLNMKGLSGLDTLKGLRAEGVDARILILTVSDAKNDIYTLIDAGADGYLLKDTEPDTLLEQIKRIAQGEVILSDSIKNLLLERTHEDNPLDSLTDREMGVLRQIATGLSNKQIAAQLFISEETVKVHIRNLLRKLNVHSRVAATVLFFEQNR.

Residues 6–122 (KVLLIDDHPL…TLLEQIKRIA (117 aa)) enclose the Response regulatory domain. Aspartate 57 is modified (4-aspartylphosphate). The HTH luxR-type domain occupies 142–207 (EDNPLDSLTD…AATVLFFEQN (66 aa)). Residues 166 to 185 (NKQIAAQLFISEETVKVHIR) constitute a DNA-binding region (H-T-H motif).

Its function is as follows. Could activate the expression of a formate dehydrogenase operon and could repress the transcription of the fumarate reductase (frdABCD) operon. This chain is Nitrate/nitrite response regulator protein homolog (narP), found in Haemophilus influenzae (strain ATCC 51907 / DSM 11121 / KW20 / Rd).